The following is a 179-amino-acid chain: Beta-defensin 22 (179 aa).

The signal sequence occupies residues Met1–Gly20. 3 cysteine pairs are disulfide-bonded: Cys27–Cys58, Cys34–Cys52, and Cys38–Cys59. Over residues Gly105–Thr150 the composition is skewed to low complexity. Residues Gly105–Ala152 are disordered.

Belongs to the beta-defensin family. Post-translationally, O-glycosylated; glycans contain alpha(2,3)-linked sialic acids. Specifically expressed in corpus epididymis and cauda epididymis with expression in corpus being highest (at protein level). Not detected in other tissues tested, including testis, prostate, seminal vesicle and vas deferens (at protein level).

The protein resides in the cytoplasmic vesicle. It localises to the secretory vesicle. It is found in the acrosome. The protein localises to the secreted. Its subcellular location is the extracellular space. Probable component of sperm glycocalyx. Likely protects and facilitates transport of sperm in the female reproductive tract. Probably released from the sperm surface during capacitation. This chain is Beta-defensin 22, found in Mus musculus (Mouse).